Reading from the N-terminus, the 346-residue chain is tRNA N6-adenosine threonylcarbamoyltransferase (346 aa).

Fe cation contacts are provided by H110 and H114. Residues 132–136 (LLSGG), D165, G178, and N274 contribute to the substrate site. Position 298 (D298) interacts with Fe cation.

Belongs to the KAE1 / TsaD family. Fe(2+) is required as a cofactor.

It is found in the cytoplasm. The catalysed reaction is L-threonylcarbamoyladenylate + adenosine(37) in tRNA = N(6)-L-threonylcarbamoyladenosine(37) in tRNA + AMP + H(+). Functionally, required for the formation of a threonylcarbamoyl group on adenosine at position 37 (t(6)A37) in tRNAs that read codons beginning with adenine. Is involved in the transfer of the threonylcarbamoyl moiety of threonylcarbamoyl-AMP (TC-AMP) to the N6 group of A37, together with TsaE and TsaB. TsaD likely plays a direct catalytic role in this reaction. In Borreliella burgdorferi (strain ZS7) (Borrelia burgdorferi), this protein is tRNA N6-adenosine threonylcarbamoyltransferase.